Here is a 508-residue protein sequence, read N- to C-terminus: Cytochrome P450 monooxygenase dmxR5 (508 aa).

Residues 24–44 (LTLGLGAILVVLMSFLAFLSY) form a helical membrane-spanning segment. N-linked (GlcNAc...) asparagine glycans are attached at residues Asn-387 and Asn-405. Cys-451 is a binding site for heme. Asn-462 carries an N-linked (GlcNAc...) asparagine glycan. A disordered region spans residues 481–508 (EHKKSTQESGHGVPLPSKLSKFSPREEN).

It belongs to the cytochrome P450 family. The cofactor is heme.

The protein resides in the membrane. The protein operates within secondary metabolite biosynthesis. Its function is as follows. Cytochrome P450 monooxygenase; part of the gene cluster that mediates the biosynthesis of the dimeric xanthones cryptosporioptides. The pathway begins with the synthesis of atrochrysone thioester by the polyketide synthase dmx-nrPKS. The atrochrysone carboxyl ACP thioesterase dmxR1 then breaks the thioester bond and releases the atrochrysone carboxylic acid from dmx-nrPKS. Atrochrysone carboxylic acid is decarboxylated by the decarboxylase dmxR15, and oxidized by the anthrone oxygenase dmxR16 to yield emodin. Emodin is then reduced to emodin hydroquinone by the oxidoreductase dmxR7. A-ring reduction by the short chain dehydrogenase dmxR18, dehydration by the scytalone dehydratase-like protein dmxR17 and probable spontaneous re-oxidation, results in overall deoxygenation to chrysophanol. Baeyer-Villiger oxidation by the Baeyer-Villiger monooxygenase (BVMO) dmxR6 then yields monodictylactone in equilibrium with monodictyphenone. In the case of the cryptosporioptides biosynthesis, monodictylactone is reduced at C-12 to an alcohol (by the short chain dehydrogenases dmxR12 or dmxR8) and hydroxylated at C-5 by dmxR9, yielding the electron-rich aromatic which could eliminate H(2)O to form the ortho-quinonemethide, followed by tautomerisation to paraquinone and complete the formal reduction to produce the 10-methylgroup. Conjugate addition of C-4a-OH to the resulting paraquinone by the monooxygenase dmxR10 then gives cyclohexadienone, which is then reduced at C-5 by the short chain dehydrogenase dmxR3 to give the dihydroxanthone. The 6,7-epoxide in the cryptosporioptides could be introduced by the cytochrome P450 monooxygenase dmxL3. The highly reducing PKS dmxL2 manufactures butyrate, which is further carboxylated by dmxL1 to form ethylmalonate. It is not yet clear whether the carboxylation occurs while the butyrate is attached to the ACP of dmxL2, but this unusual fungal metabolite could then be esterified to O-5 by the O-acetyltransferase dmxR13. Finally, dimerization performed by dmxR5 gives the observed dimers cryptosporioptides A, B and C as the final products of the pathway. In Cryptosporiopsis sp. (strain 8999), this protein is Cytochrome P450 monooxygenase dmxR5.